The following is a 267-amino-acid chain: Ubiquinone biosynthesis protein COQ4 homolog, mitochondrial (267 aa).

Residues H170, D171, H174, and E186 each coordinate Zn(2+).

It belongs to the COQ4 family. As to quaternary structure, component of a multi-subunit COQ enzyme complex. Zn(2+) is required as a cofactor.

It localises to the mitochondrion inner membrane. The catalysed reaction is a 4-hydroxy-3-methoxy-5-(all-trans-polyprenyl)benzoate + H(+) = a 2-methoxy-6-(all-trans-polyprenyl)phenol + CO2. It functions in the pathway cofactor biosynthesis; ubiquinone biosynthesis. Its function is as follows. Lyase that catalyzes the C1-decarboxylation of 4-hydroxy-3-methoxy-5-(all-trans-polyprenyl)benzoic acid into 2-methoxy-6-(all-trans-polyprenyl)phenol during ubiquinone biosynthesis. This is Ubiquinone biosynthesis protein COQ4 homolog, mitochondrial from Drosophila pseudoobscura pseudoobscura (Fruit fly).